Consider the following 54-residue polypeptide: UPF0391 membrane protein Bpet1858 (54 aa).

The next 2 membrane-spanning stretches (helical) occupy residues 5–25 (AVVFFVIAIIAAVLGFGGIAA) and 27–47 (AAGIAKILFFVFLILALLSIL).

Belongs to the UPF0391 family.

Its subcellular location is the cell membrane. This is UPF0391 membrane protein Bpet1858 from Bordetella petrii (strain ATCC BAA-461 / DSM 12804 / CCUG 43448).